The primary structure comprises 196 residues: uncharacterized protein (196 aa).

Positions 51–164 (VAEHSLLVEE…DRIFGKPDPV (114 aa)) constitute an HD domain.

This is an uncharacterized protein from Rhodobacter capsulatus (strain ATCC BAA-309 / NBRC 16581 / SB1003).